The primary structure comprises 64 residues: Probable cytochrome c oxidase subunit 5C-3 (64 aa).

Residues 15–34 (SVVKELVIGLTLGLAAGGLW) traverse the membrane as a helical segment.

Belongs to the cytochrome c oxidase subunit 5C family.

The protein resides in the mitochondrion inner membrane. In terms of biological role, this protein is one of the nuclear-coded polypeptide chains of cytochrome c oxidase, the terminal oxidase in mitochondrial electron transport. This Arabidopsis thaliana (Mouse-ear cress) protein is Probable cytochrome c oxidase subunit 5C-3.